The sequence spans 545 residues: MARQALRSTLWLLPSILLCFPFCLPLSGQHVTELPGVLHCGLQSFQFAVNLSLEAESPVLTTWDSQGLPHRLKNDSDCGTWVMDSPDGFLVLEASYSGCYVTLEGSHYIMTVGVQEADVAGHVAGTRQRLLTCPLALQGKAPDTPNAKVCSPVPVKERLPCASSTISRGDCEELGCCYSSEEEGADSCYYGNTVTSHCTKEGHFSIAVSRDVTSPPLRLDSLRLGFRNITTGCDPVMKTSTFVLFQFPLTSCGTTQRITGDQAMYENELVAIRDVQAWGRSSITRDSNFRLRVSCTYSIHSIMSPVNMQVWTLPPPLPKTQPGPLSLELQIAQDKNYSSYYGTDAYPLVKFLQDPIYVEVSILHRTDPSLSLLLEQCWATPGSNPFHQPQWPILVKGCPYAGDNYQTKRIPVQKASDVFPSHHQRFSISTFSFMSAGREKQVLGGQVYLHCSASVCQPAGMPSCTVICPASRRRRKSELYFDNSTSISSKGPVILLQATKDPAVMLHKHSGTHADSPTLWVMGLSASMVITGVLVVSYLATRKQR.

The first 28 residues, 1-28 (MARQALRSTLWLLPSILLCFPFCLPLSG), serve as a signal peptide directing secretion. The Extracellular segment spans residues 29 to 518 (QHVTELPGVL…HSGTHADSPT (490 aa)). N-linked (GlcNAc...) asparagine glycosylation is found at Asn-50 and Asn-74. In terms of domain architecture, P-type spans 148 to 192 (KVCSPVPVKERLPCASSTISRGDCEELGCCYSSEEEGADSCYYGN). A ZP domain is found at 197 to 471 (HCTKEGHFSI…PSCTVICPAS (275 aa)). N-linked (GlcNAc...) asparagine glycosylation occurs at Asn-228. Thr-312 carries O-linked (GalNAc...) threonine glycosylation. Asn-336 carries an N-linked (GlcNAc...) asparagine glycan. Cys-377 and Cys-451 are disulfide-bonded. A propeptide spans 472–545 (RRRRKSELYF…VSYLATRKQR (74 aa)) (removed in mature form). A glycan (N-linked (GlcNAc...) asparagine) is linked at Asn-483. The helical transmembrane segment at 519–539 (LWVMGLSASMVITGVLVVSYL) threads the bilayer. The Cytoplasmic portion of the chain corresponds to 540–545 (ATRKQR).

It belongs to the ZP domain family. ZPB subfamily. Post-translationally, proteolytically cleaved before the transmembrane segment to yield the secreted ectodomain incorporated in the zona pellucida. As to expression, expressed in oocytes.

It localises to the zona pellucida. The protein resides in the cell membrane. Component of the zona pellucida, an extracellular matrix surrounding oocytes which mediates sperm binding, induction of the acrosome reaction and prevents post-fertilization polyspermy. The zona pellucida is composed of 3 to 4 glycoproteins, ZP1, ZP2, ZP3, and ZP4. ZP4 may act as a sperm receptor. The sequence is that of Zona pellucida sperm-binding protein 4 (Zp4) from Rattus norvegicus (Rat).